The chain runs to 80 residues: Small ribosomal subunit protein bS16c (80 aa).

This sequence belongs to the bacterial ribosomal protein bS16 family.

The protein resides in the plastid. It is found in the chloroplast. The sequence is that of Small ribosomal subunit protein bS16c from Lotus japonicus (Lotus corniculatus var. japonicus).